The following is a 497-amino-acid chain: Cysteine--tRNA ligase (497 aa).

A Zn(2+)-binding site is contributed by C34. The 'HIGH' region signature appears at 36-46; the sequence is PTVYDFAHIGN. C243, H268, and E272 together coordinate Zn(2+). The 'KMSKS' region motif lies at 301-305; that stretch reads KMAKS. K304 is an ATP binding site. A disordered region spans residues 478 to 497; sequence LMDYKDPETGERRTKWEVKR. Residues 480–497 show a composition bias toward basic and acidic residues; sequence DYKDPETGERRTKWEVKR.

This sequence belongs to the class-I aminoacyl-tRNA synthetase family. Monomer. It depends on Zn(2+) as a cofactor.

It is found in the cytoplasm. The catalysed reaction is tRNA(Cys) + L-cysteine + ATP = L-cysteinyl-tRNA(Cys) + AMP + diphosphate. This is Cysteine--tRNA ligase from Chelativorans sp. (strain BNC1).